A 136-amino-acid polypeptide reads, in one-letter code: Holo-[acyl-carrier-protein] synthase (136 aa).

Asp8 and Glu57 together coordinate Mg(2+).

It belongs to the P-Pant transferase superfamily. AcpS family. Mg(2+) serves as cofactor.

It is found in the cytoplasm. It catalyses the reaction apo-[ACP] + CoA = holo-[ACP] + adenosine 3',5'-bisphosphate + H(+). Its function is as follows. Transfers the 4'-phosphopantetheine moiety from coenzyme A to a Ser of acyl-carrier-protein. The polypeptide is Holo-[acyl-carrier-protein] synthase (Methylorubrum extorquens (strain PA1) (Methylobacterium extorquens)).